A 96-amino-acid chain; its full sequence is uncharacterized protein (96 aa).

The signal sequence occupies residues 1–23 (MKQFYSVVLTIIIYISSQSNVVS). 3 disulfides stabilise this stretch: C60–C74, C67–C78, and C73–C83.

It localises to the secreted. This is an uncharacterized protein from Schistosoma japonicum (Blood fluke).